The primary structure comprises 157 residues: 2-C-methyl-D-erythritol 2,4-cyclodiphosphate synthase (157 aa).

Aspartate 9 and histidine 11 together coordinate a divalent metal cation. 4-CDP-2-C-methyl-D-erythritol 2-phosphate-binding positions include 9 to 11 (DVH) and 35 to 36 (HS). Histidine 43 contacts a divalent metal cation. Residues 57 to 59 (DIG), 62 to 66 (FPDTD), 101 to 107 (AEKPKMA), 133 to 136 (TTTE), phenylalanine 140, and arginine 143 each bind 4-CDP-2-C-methyl-D-erythritol 2-phosphate.

This sequence belongs to the IspF family. Homotrimer. The cofactor is a divalent metal cation.

The enzyme catalyses 4-CDP-2-C-methyl-D-erythritol 2-phosphate = 2-C-methyl-D-erythritol 2,4-cyclic diphosphate + CMP. Its pathway is isoprenoid biosynthesis; isopentenyl diphosphate biosynthesis via DXP pathway; isopentenyl diphosphate from 1-deoxy-D-xylulose 5-phosphate: step 4/6. In terms of biological role, involved in the biosynthesis of isopentenyl diphosphate (IPP) and dimethylallyl diphosphate (DMAPP), two major building blocks of isoprenoid compounds. Catalyzes the conversion of 4-diphosphocytidyl-2-C-methyl-D-erythritol 2-phosphate (CDP-ME2P) to 2-C-methyl-D-erythritol 2,4-cyclodiphosphate (ME-CPP) with a corresponding release of cytidine 5-monophosphate (CMP). This chain is 2-C-methyl-D-erythritol 2,4-cyclodiphosphate synthase, found in Listeria monocytogenes serovar 1/2a (strain ATCC BAA-679 / EGD-e).